The primary structure comprises 1383 residues: DNA-directed RNA polymerase subunit beta'' (1383 aa).

Residues cysteine 220, cysteine 289, cysteine 296, and cysteine 299 each contribute to the Zn(2+) site.

It belongs to the RNA polymerase beta' chain family. RpoC2 subfamily. As to quaternary structure, in plastids the minimal PEP RNA polymerase catalytic core is composed of four subunits: alpha, beta, beta', and beta''. When a (nuclear-encoded) sigma factor is associated with the core the holoenzyme is formed, which can initiate transcription. The cofactor is Zn(2+).

The protein resides in the plastid. It is found in the chloroplast. The enzyme catalyses RNA(n) + a ribonucleoside 5'-triphosphate = RNA(n+1) + diphosphate. In terms of biological role, DNA-dependent RNA polymerase catalyzes the transcription of DNA into RNA using the four ribonucleoside triphosphates as substrates. This Oenothera biennis (German evening primrose) protein is DNA-directed RNA polymerase subunit beta''.